Reading from the N-terminus, the 245-residue chain is 8-amino-3,8-dideoxy-manno-octulosonate cytidylyltransferase (245 aa).

It belongs to the KdsB family.

The protein resides in the cytoplasm. The catalysed reaction is 8-amino-3,8-dideoxy-alpha-D-manno-octulosonate + CTP = CMP-8-amino-3,8-dideoxy-alpha-D-manno-oct-2-ulosonate + diphosphate. It participates in bacterial outer membrane biogenesis; lipopolysaccharide biosynthesis. Functionally, activates KDO8N (a required 8-carbon sugar) for incorporation into bacterial lipopolysaccharide in the Shewanella genus. The protein is 8-amino-3,8-dideoxy-manno-octulosonate cytidylyltransferase of Shewanella halifaxensis (strain HAW-EB4).